The primary structure comprises 106 residues: Large ribosomal subunit protein uL23 (106 aa).

The protein belongs to the universal ribosomal protein uL23 family. In terms of assembly, part of the 50S ribosomal subunit. Contacts protein L29, and trigger factor when it is bound to the ribosome.

One of the early assembly proteins it binds 23S rRNA. One of the proteins that surrounds the polypeptide exit tunnel on the outside of the ribosome. Forms the main docking site for trigger factor binding to the ribosome. The protein is Large ribosomal subunit protein uL23 of Neisseria meningitidis serogroup C / serotype 2a (strain ATCC 700532 / DSM 15464 / FAM18).